The following is a 311-amino-acid chain: Ribonuclease HIII (311 aa).

The region spanning 95–311 is the RNase H type-2 domain; it reads MSIVGSDEVG…NTEKALRLLR (217 aa). Residues Asp101, Glu102, and Asp206 each contribute to the a divalent metal cation site.

This sequence belongs to the RNase HII family. RnhC subfamily. Requires Mn(2+) as cofactor. The cofactor is Mg(2+).

It localises to the cytoplasm. It catalyses the reaction Endonucleolytic cleavage to 5'-phosphomonoester.. Its function is as follows. Endonuclease that specifically degrades the RNA of RNA-DNA hybrids. In Bacillus cereus (strain ATCC 14579 / DSM 31 / CCUG 7414 / JCM 2152 / NBRC 15305 / NCIMB 9373 / NCTC 2599 / NRRL B-3711), this protein is Ribonuclease HIII.